The sequence spans 465 residues: UDP-N-acetylmuramate--L-alanine ligase (465 aa).

112 to 118 is an ATP binding site; sequence GTHGKTT.

The protein belongs to the MurCDEF family.

The protein resides in the cytoplasm. It catalyses the reaction UDP-N-acetyl-alpha-D-muramate + L-alanine + ATP = UDP-N-acetyl-alpha-D-muramoyl-L-alanine + ADP + phosphate + H(+). It participates in cell wall biogenesis; peptidoglycan biosynthesis. In terms of biological role, cell wall formation. The protein is UDP-N-acetylmuramate--L-alanine ligase of Burkholderia vietnamiensis (strain G4 / LMG 22486) (Burkholderia cepacia (strain R1808)).